A 676-amino-acid polypeptide reads, in one-letter code: Vitamin K-dependent protein S (676 aa).

The signal sequence occupies residues 1-24 (MRVLGGRCGALLACLLLVLPVSEA). Residues 25-41 (NFLSKQQASQVLVRKRR) constitute a propeptide that is removed on maturation. Residues 42-87 (ANSLLEETKQGNLERECIEELCNKEEAREVFENDPETDYFYPKYLV) enclose the Gla domain. 4-carboxyglutamate occurs at positions 47, 48, 55, 57, 60, 61, 66, 67, 70, 73, and 77. Cys-58 and Cys-63 are disulfide-bonded. The thrombin-sensitive stretch occupies residues 88 to 116 (CLRSFQTGLFTAARQSTNAYPDLRSCVNA). The EGF-like 1 domain occupies 117–155 (IPDQCSPLPCNEDGYMSCKDGKASFTCTCKPGWQGEKCE). Cystine bridges form between Cys-121–Cys-134, Cys-126–Cys-143, Cys-145–Cys-154, Cys-161–Cys-175, Cys-171–Cys-184, Cys-186–Cys-199, Cys-205–Cys-217, Cys-212–Cys-226, Cys-228–Cys-241, Cys-247–Cys-256, Cys-252–Cys-265, Cys-267–Cys-282, and Cys-449–Cys-475. Residue Asp-136 is modified to (3R)-3-hydroxyaspartate. Positions 157–200 (DINECKDPSNINGGCSQICDNTPGSYHCSCKNGFVMLSNKKDCK) constitute an EGF-like 2; calcium-binding domain. In terms of domain architecture, EGF-like 3; calcium-binding spans 201–242 (DVDECSLKPSICGTAVCKNIPGDFECECPEGYRYNLKSKSCE). The EGF-like 4; calcium-binding domain maps to 243 to 283 (DIDECSENMCAQLCVNYPGGYTCYCDGKKGFKLAQDQKSCE). 2 Laminin G-like domains span residues 299–475 (LLYL…NKHC) and 484–666 (YYPG…AHSC). N-linked (GlcNAc...) asparagine glycans are attached at residues Asn-499, Asn-509, and Asn-530. A disulfide bridge connects residues Cys-639 and Cys-666.

Post-translationally, the iron and 2-oxoglutarate dependent 3-hydroxylation of aspartate and asparagine is (R) stereospecific within EGF domains. As to expression, plasma.

It is found in the secreted. Functionally, anticoagulant plasma protein; it is a cofactor to activated protein C in the degradation of coagulation factors Va and VIIIa. It helps to prevent coagulation and stimulating fibrinolysis. In Homo sapiens (Human), this protein is Vitamin K-dependent protein S (PROS1).